We begin with the raw amino-acid sequence, 248 residues long: Probable uridine-cytidine kinase (248 aa).

15 to 23 (GGTSCGKST) lines the ATP pocket. Substrate-binding residues include D73, Y101, R154, R164, and Q172. Residue D201 participates in ATP binding. The interval 224–248 (SDEEEEKENELVKQGSFRRPFSRPH) is disordered.

The protein belongs to the uridine kinase family.

The catalysed reaction is uridine + ATP = UMP + ADP + H(+). It carries out the reaction cytidine + ATP = CMP + ADP + H(+). It functions in the pathway pyrimidine metabolism; CTP biosynthesis via salvage pathway; CTP from cytidine: step 1/3. The protein operates within pyrimidine metabolism; UMP biosynthesis via salvage pathway; UMP from uridine: step 1/1. This chain is Probable uridine-cytidine kinase, found in Caenorhabditis elegans.